Reading from the N-terminus, the 497-residue chain is MTDASKDIVSVRSLTKSYGATVVLKGVDFSVARGEIHALLGGNGAGKSTLIRVITGTAAKDGGELVFRDMAGNILTEADGRRKVAVVHQELALLPHLTVAESIALPHFRKGSRVYDGRTAGSQAYAALSMIDRDFAGTALNRLVGDLSLHEGQMVEIARALSSGAELILLDEPTANLTAAETERLFGVLRKLTRGNGLSVVFVSHRMKEIRQIAHVCSIIRDGRTVVGNVPTAELSDLAIIEHMGQAQATAVAHSARPAPVASLSDEPLTIAETGFSVTLQPGTILGVAGAPAGPETLIAALIGAAHERRWTVTRAGWPDRFRSPREAARLGAGFVTGDRSHRGILHSLPIIDNVLASRRATRGSLFATKREEVECLDLMQALKVKAGSLWHLPNTLSGGTQQKLLLARWLNVPSRLLVLEEPTRGVDIGTKREIYQLIRDMATTGTAIVWWSTENAELLEICDQVLAFDTEGRSSGVIERDELSEDKLATLTGMAA.

2 ABC transporter domains span residues 9–247 and 256–496; these read VSVR…MGQA and ARPA…TGMA. 41–48 is a binding site for ATP; that stretch reads GGNGAGKS.

The protein belongs to the ABC transporter superfamily. Ribose importer (TC 3.A.1.2.1) family.

It is found in the cell membrane. Probably part of the binding-protein-dependent transport system y4mIJK. This system probably transports a sugar. Probably responsible for energy coupling to the transport system. This is an uncharacterized protein from Sinorhizobium fredii (strain NBRC 101917 / NGR234).